The following is a 270-amino-acid chain: DNA repair protein RecO (270 aa).

This sequence belongs to the RecO family.

In terms of biological role, involved in DNA repair and RecF pathway recombination. The polypeptide is DNA repair protein RecO (Synechococcus sp. (strain WH7803)).